Reading from the N-terminus, the 202-residue chain is GTP cyclohydrolase-2 (202 aa).

48–52 (RLHSE) is a binding site for GTP. Zn(2+) contacts are provided by Cys53, Cys64, and Cys66. GTP is bound by residues Gln69, 91–93 (EGR), and Thr113. The Proton acceptor role is filled by Asp125. The active-site Nucleophile is Arg127. GTP is bound by residues Thr148 and Lys153.

The protein belongs to the GTP cyclohydrolase II family. It depends on Zn(2+) as a cofactor.

The enzyme catalyses GTP + 4 H2O = 2,5-diamino-6-hydroxy-4-(5-phosphoribosylamino)-pyrimidine + formate + 2 phosphate + 3 H(+). The protein operates within cofactor biosynthesis; riboflavin biosynthesis; 5-amino-6-(D-ribitylamino)uracil from GTP: step 1/4. Its function is as follows. Catalyzes the conversion of GTP to 2,5-diamino-6-ribosylamino-4(3H)-pyrimidinone 5'-phosphate (DARP), formate and pyrophosphate. The chain is GTP cyclohydrolase-2 from Colwellia psychrerythraea (strain 34H / ATCC BAA-681) (Vibrio psychroerythus).